The following is a 74-amino-acid chain: MEIKYLLTVFLVLLIVSDHCQAFLFSLIPHAISGLISAFKGRRKRDLDGQIDRFRNFRKRDAELEELLSKLPIY.

A signal peptide spans 1–22; it reads MEIKYLLTVFLVLLIVSDHCQA. A Lysine amide modification is found at K40. Positions 46 to 74 are excised as a propeptide; sequence DLDGQIDRFRNFRKRDAELEELLSKLPIY.

Belongs to the non-disulfide-bridged peptide (NDBP) superfamily. Short antimicrobial peptide (group 4) family. Expressed by the venom gland.

The protein localises to the secreted. The protein resides in the target cell membrane. Has antimicrobial activity against the Gram-positive bacteria S.aureus (MIC=8 uM) and the yeast C.albicans (MIC=16 uM). Causes hemolysis on horse erythrocytes (64 uM for 100% hemolysis). Minimum bactericidal concentrations have also been tested against S.aureus and is four-fold higher (MBC=32 uM). This chain is Antimicrobial peptide AcrAP1, found in Androctonus crassicauda (Arabian fat-tailed scorpion).